A 335-amino-acid polypeptide reads, in one-letter code: UPF0353 protein NFA_34780 (335 aa).

2 consecutive transmembrane segments (helical) span residues 8-28 (ALIW…YVLV) and 61-81 (IALM…PTSV). The VWFA domain occupies 90–295 (TVVLVMDVSL…EELTAVYDTL (206 aa)). A helical transmembrane segment spans residues 310-330 (RPWLLLGMLVVAAGIVTGLLY).

This sequence belongs to the UPF0353 family.

It localises to the cell membrane. The sequence is that of UPF0353 protein NFA_34780 from Nocardia farcinica (strain IFM 10152).